Consider the following 126-residue polypeptide: Fluoride-specific ion channel FluC 2 (126 aa).

4 helical membrane-spanning segments follow: residues 5-25 (TALT…GSVL), 44-64 (GTLT…GLAL), 68-88 (AALL…TWML), and 99-119 (MVSA…AALL). The Na(+) site is built by G78 and T81.

The protein belongs to the fluoride channel Fluc/FEX (TC 1.A.43) family.

The protein localises to the cell membrane. The enzyme catalyses fluoride(in) = fluoride(out). Na(+) is not transported, but it plays an essential structural role and its presence is essential for fluoride channel function. Functionally, fluoride-specific ion channel. Important for reducing fluoride concentration in the cell, thus reducing its toxicity. In Mycobacterium bovis (strain ATCC BAA-935 / AF2122/97), this protein is Fluoride-specific ion channel FluC 2.